The following is a 283-amino-acid chain: Elongation factor Ts (283 aa).

Positions 80 to 83 (TDFV) are involved in Mg(2+) ion dislocation from EF-Tu.

The protein belongs to the EF-Ts family.

The protein localises to the cytoplasm. Associates with the EF-Tu.GDP complex and induces the exchange of GDP to GTP. It remains bound to the aminoacyl-tRNA.EF-Tu.GTP complex up to the GTP hydrolysis stage on the ribosome. The polypeptide is Elongation factor Ts (Haemophilus ducreyi (strain 35000HP / ATCC 700724)).